A 627-amino-acid chain; its full sequence is Lactose permease (627 aa).

The segment at 1 to 460 is permease; sequence MKKKLVSRLS…AEIVDQLETQ (460 aa). The next 12 helical transmembrane spans lie at 13 to 33, 46 to 66, 84 to 104, 111 to 131, 159 to 179, 193 to 213, 244 to 264, 281 to 301, 309 to 329, 336 to 356, 392 to 412, and 419 to 439; these read AGAF…IVFV, IFII…LDPL, WVVG…TDFG, PVVY…FYSF, VGST…ILFF, WFFF…TVGL, LLWL…LNAL, LLYT…PSLA, LFYA…VASG, VGAE…LMII, WFVS…ASTI, and VFKL…VSIF. In terms of domain architecture, PTS EIIA type-1 spans 493–597; that stretch reads DPVFADKKLG…DDTVIVTVIN (105 aa). The residue at position 545 (histidine 545) is a Phosphohistidine; by HPr.

The protein in the N-terminal section; belongs to the sodium:galactoside symporter (TC 2.A.2) family.

Its subcellular location is the cell membrane. In terms of biological role, responsible for transport of beta-galactosides into the cell, with the concomitant uptake of protons (symport system), and also for transport of homologous and heterologous exchange of beta-galactosides. The chain is Lactose permease (lacY) from Lactobacillus delbrueckii subsp. bulgaricus (strain ATCC 11842 / DSM 20081 / BCRC 10696 / JCM 1002 / NBRC 13953 / NCIMB 11778 / NCTC 12712 / WDCM 00102 / Lb 14).